A 480-amino-acid polypeptide reads, in one-letter code: Immune evasion protein OPG047 (480 aa).

Residues 10–90 form the BTB domain; that stretch reads CKNILALSMT…SYTGKVYIDS (81 aa). Residues 125–223 enclose the BACK domain; sequence CVECYMMGIE…NYLSPRGINN (99 aa). Kelch repeat units lie at residues 273–319, 320–363, 365–408, 410–447, and 448–480; these read VVYL…PANN, KLYV…SINN, IYVM…VFGR, LFLV…IVDN, and KLLL…WDGK.

This sequence belongs to the orthopoxvirus OPG047 family.

In terms of biological role, might have a role in the suppression of host immune response. The polypeptide is Immune evasion protein OPG047 (OPG047) (Vaccinia virus (strain Copenhagen) (VACV)).